We begin with the raw amino-acid sequence, 251 residues long: Putative cysteine-rich repeat secretory protein 36 (251 aa).

Residues 1–28 (MHSSYSLSKCLVCFTILAIQTLIRRVSS) form the signal peptide. 2 consecutive Gnk2-homologous domains span residues 35–139 (YLNH…NSPP) and 144–248 (YENT…LYPF).

The protein belongs to the cysteine-rich repeat secretory protein family.

It localises to the secreted. This Arabidopsis thaliana (Mouse-ear cress) protein is Putative cysteine-rich repeat secretory protein 36 (CRRSP36).